The chain runs to 979 residues: Disks large-associated protein 3 (979 aa).

Over residues 1–10 (MRGYHGDRGS) the composition is skewed to basic and acidic residues. 6 disordered regions span residues 1–20 (MRGYHGDRGSHPRPARFADQ), 52–95 (AGLG…MYPG), 136–169 (FHTLPYQRGPAGAGPGPAPGTGTAPEPRSESPSR), 182–291 (AKSH…CLEG), 400–429 (AMGDEESGDSDGSPKTSPKAVARRFTTRRS), and 537–581 (FRKA…RCSS). Serine 58 is modified (phosphoserine). The segment covering 73-86 (PEGGPAGAGVGGGS) has biased composition (gly residues). A compositionally biased stretch (basic and acidic residues) spans 190–202 (PGKRDYNGPKAEG). Over residues 203-218 (RGGSGGDSYPGPGSGG) the composition is skewed to gly residues. A compositionally biased stretch (basic residues) spans 221 to 246 (TSHHHHHHHHHHHHQSRHGKRSKSKD). A phosphoserine mark is found at serine 406, serine 409, serine 412, and serine 416. Residues 540–549 (APPPIPPGSQ) are compositionally biased toward pro residues. Serine 643 and serine 645 each carry phosphoserine. Disordered stretches follow at residues 741-790 (EGYP…RASP) and 908-940 (EEKKVPPPIPKKPLRGRGVPVKERSLDSVDRQR). Composition is skewed to basic and acidic residues over residues 769–779 (GRRDSWIERGS) and 927–940 (PVKERSLDSVDRQR). A phosphoserine mark is found at serine 932, serine 935, and serine 967.

The protein belongs to the SAPAP family. As to quaternary structure, interacts with DLG4/PSD-95.

The protein resides in the cell membrane. It is found in the postsynaptic density. The protein localises to the synapse. Its function is as follows. May play a role in the molecular organization of synapses and neuronal cell signaling. Could be an adapter protein linking ion channel to the subsynaptic cytoskeleton. May induce enrichment of PSD-95/SAP90 at the plasma membrane. In Homo sapiens (Human), this protein is Disks large-associated protein 3 (DLGAP3).